The sequence spans 130 residues: Large ribosomal subunit protein bL19 (130 aa).

It belongs to the bacterial ribosomal protein bL19 family.

This protein is located at the 30S-50S ribosomal subunit interface and may play a role in the structure and function of the aminoacyl-tRNA binding site. The polypeptide is Large ribosomal subunit protein bL19 (Mycoplasma mycoides subsp. mycoides SC (strain CCUG 32753 / NCTC 10114 / PG1)).